Reading from the N-terminus, the 146-residue chain is Globin-1 (146 aa).

Positions 9-146 constitute a Globin domain; the sequence is QLTADVKKDL…KLVAVVQAAL (138 aa). Position 101 (His-101) interacts with heme b.

The protein belongs to the globin family. As to quaternary structure, homodimer.

It localises to the cytoplasm. The polypeptide is Globin-1 (Anadara inaequivalvis (Inequivalve ark)).